The primary structure comprises 180 residues: Large ribosomal subunit protein uL5 (180 aa).

This sequence belongs to the universal ribosomal protein uL5 family. As to quaternary structure, part of the 50S ribosomal subunit; part of the 5S rRNA/L5/L18/L25 subcomplex. Contacts the 5S rRNA and the P site tRNA. Forms a bridge to the 30S subunit in the 70S ribosome.

This is one of the proteins that bind and probably mediate the attachment of the 5S RNA into the large ribosomal subunit, where it forms part of the central protuberance. In the 70S ribosome it contacts protein S13 of the 30S subunit (bridge B1b), connecting the 2 subunits; this bridge is implicated in subunit movement. Contacts the P site tRNA; the 5S rRNA and some of its associated proteins might help stabilize positioning of ribosome-bound tRNAs. In Ralstonia pickettii (strain 12J), this protein is Large ribosomal subunit protein uL5.